A 239-amino-acid chain; its full sequence is 7-cyano-7-deazaguanine synthase (239 aa).

13-23 (LSGGQDSATCL) is an ATP binding site. Residues C199, C214, C217, and C220 each contribute to the Zn(2+) site.

The protein belongs to the QueC family. It depends on Zn(2+) as a cofactor.

The enzyme catalyses 7-carboxy-7-deazaguanine + NH4(+) + ATP = 7-cyano-7-deazaguanine + ADP + phosphate + H2O + H(+). Its pathway is purine metabolism; 7-cyano-7-deazaguanine biosynthesis. Catalyzes the ATP-dependent conversion of 7-carboxy-7-deazaguanine (CDG) to 7-cyano-7-deazaguanine (preQ(0)). In Acidovorax ebreus (strain TPSY) (Diaphorobacter sp. (strain TPSY)), this protein is 7-cyano-7-deazaguanine synthase.